A 336-amino-acid polypeptide reads, in one-letter code: Thiamine thiazole synthase (336 aa).

Substrate-binding positions include alanine 89, 110 to 111 (ES), glycine 118, and cysteine 183. At cysteine 219 the chain carries 2,3-didehydroalanine (Cys). Substrate-binding positions include aspartate 221, histidine 236, methionine 288, and 298–300 (RMG).

It belongs to the THI4 family. Homooctamer. Fe cation serves as cofactor. In terms of processing, during the catalytic reaction, a sulfide is transferred from Cys-219 to a reaction intermediate, generating a dehydroalanine residue.

Its subcellular location is the cytoplasm. The protein localises to the nucleus. It carries out the reaction [ADP-thiazole synthase]-L-cysteine + glycine + NAD(+) = [ADP-thiazole synthase]-dehydroalanine + ADP-5-ethyl-4-methylthiazole-2-carboxylate + nicotinamide + 3 H2O + 2 H(+). Involved in biosynthesis of the thiamine precursor thiazole. Catalyzes the conversion of NAD and glycine to adenosine diphosphate 5-(2-hydroxyethyl)-4-methylthiazole-2-carboxylic acid (ADT), an adenylated thiazole intermediate. The reaction includes an iron-dependent sulfide transfer from a conserved cysteine residue of the protein to a thiazole intermediate. The enzyme can only undergo a single turnover, which suggests it is a suicide enzyme. May have additional roles in adaptation to various stress conditions and in DNA damage tolerance. This is Thiamine thiazole synthase from Puccinia graminis f. sp. tritici (strain CRL 75-36-700-3 / race SCCL) (Black stem rust fungus).